The following is a 439-amino-acid chain: Skin secretory protein xP2 (439 aa).

The N-terminal stretch at 1 to 22 (MNHKLFCVHFLLLILSVCYIQG) is a signal peptide. The disordered stretch occupies residues 25–351 (AGGEPAPAEG…VEVGPKTEDC (327 aa)). 5 repeat units span residues 26–33 (GGEPAPAE), 34–41 (GVAPAPAE), 42–51 (GGAPAPAPAE), 52–59 (GEAPAPAE), and 60–69 (GGAPAPAPAE). Positions 26 to 343 (GGEPAPAEGV…APAPAPAPVE (318 aa)) are 33 X approximate repeats of G-G(0,1)-[EV](0,1)-A-P-[A-P](1,3)-A-E. A compositionally biased stretch (low complexity) spans 26-345 (GGEPAPAEGV…APAPAPVEVG (320 aa)). The stretch at 70-77 (GAEPAPAD) is one 6; approximate repeat. 9 repeat units span residues 78 to 87 (GGAPAPAPAE), 88 to 97 (GGAPAPAPAE), 98 to 107 (GGAPAPAPAE), 108 to 115 (GGAPAPAE), 116 to 125 (GGAPAPAPAE), 126 to 135 (GEAPAPAPAE), 136 to 145 (GEAPAPAPAE), 146 to 153 (GEAPAPAE), and 154 to 163 (GEAPAPAPAE). The 16; approximate repeat unit spans residues 164–173 (VEAPAPAPAE). Tandem repeats lie at residues 174-183 (GEAPAPAPAE), 184-193 (GEAPAPAPAE), 194-203 (GEAPAPAPAE), 204-215 (GEAPAPAPAPAE), 216-225 (GEAPAPAPAE), 226-235 (GEAPAPAPAE), 236-245 (GEAPAPAPAE), 246-255 (GEAPAPAPAE), 256-265 (GEAPAPAPAE), 266-275 (GEAPAPAPAE), 276-285 (GEAPAPAPAE), 286-293 (GEAPAPAE), 294-303 (GEAPAPAPAE), and 304-313 (GEAPAPAPAE). The stretch at 314–321 (GGAPSPAE) is one 31; approximate repeat. A 32; approximate repeat occupies 322–331 (GGAPAAAPAE). A 33; approximate repeat occupies 332 to 343 (GGAPAPAPAPVE). 2 consecutive P-type domains span residues 349–392 (EDCK…FFPR) and 396–439 (AQCL…FHQK). Cystine bridges form between cysteine 351-cysteine 377, cysteine 361-cysteine 376, cysteine 371-cysteine 388, cysteine 398-cysteine 424, cysteine 408-cysteine 423, and cysteine 418-cysteine 435.

As to expression, skin.

Its subcellular location is the secreted. Functionally, may act as a growth factor in the germinal layer of the epidermis. May also be involved in growth of regenerating glands and in protection of the skin from the external environment. The protein is Skin secretory protein xP2 (p2) of Xenopus laevis (African clawed frog).